A 469-amino-acid polypeptide reads, in one-letter code: RNA-editing ligase 1, mitochondrial (469 aa).

A mitochondrion-targeting transit peptide spans 1-44 (MQLQRLGAPLLKRLVGGCIRQSTAPIMPCVVVSGSGVFLTPVRT). Residues 59-61 (IEI), 86-92 (EKVHGTN), arginine 111, glutamate 159, phenylalanine 209, and 307-309 (KLR) each bind ATP. Lysine 87 serves as the catalytic N6-AMP-lysine intermediate. The segment at 450–469 (AAAQSEAIPPLSPAAPTKGE) is disordered.

The protein belongs to the RNA ligase 2 family. In terms of assembly, component of the RNA editing complex (editosome), a 1600 kDa complex composed of at least 20 proteins. Interacts with terminal uridylyltransferase MEAT1.

The protein localises to the mitochondrion. It carries out the reaction ATP + (ribonucleotide)n-3'-hydroxyl + 5'-phospho-(ribonucleotide)m = (ribonucleotide)n+m + AMP + diphosphate.. In terms of biological role, essential for RNA editing. RNA editing in kinetoplastid mitochondria inserts and deletes uridylates at multiple sites in pre-mRNAs as directed by guide RNAs. This chain is RNA-editing ligase 1, mitochondrial (REL1), found in Trypanosoma brucei brucei.